The chain runs to 337 residues: Inositol 2-dehydrogenase (337 aa).

This sequence belongs to the Gfo/Idh/MocA family. As to quaternary structure, homotetramer.

It catalyses the reaction myo-inositol + NAD(+) = scyllo-inosose + NADH + H(+). Involved in the oxidation of myo-inositol (MI) to 2-keto-myo-inositol (2KMI or 2-inosose). The chain is Inositol 2-dehydrogenase from Klebsiella pneumoniae (strain 342).